The sequence spans 188 residues: 3-deoxy-D-manno-octulosonate 8-phosphate phosphatase KdsC (188 aa).

The Mg(2+) site is built by D32 and D34. Substrate-binding positions include D34, N55 to G59, R63, R78, R86, and K102. D125 contacts Mg(2+).

As to quaternary structure, homotetramer. Mg(2+) is required as a cofactor. The cofactor is Co(2+).

The enzyme catalyses 3-deoxy-alpha-D-manno-2-octulosonate-8-phosphate + H2O = 3-deoxy-alpha-D-manno-oct-2-ulosonate + phosphate. It functions in the pathway carbohydrate biosynthesis; 3-deoxy-D-manno-octulosonate biosynthesis; 3-deoxy-D-manno-octulosonate from D-ribulose 5-phosphate: step 3/3. It participates in bacterial outer membrane biogenesis; lipopolysaccharide biosynthesis. Inhibited by calcium, cadmium, mercury, and copper ions. Its function is as follows. Catalyzes the hydrolysis of 3-deoxy-D-manno-octulosonate 8-phosphate (KDO 8-P) to 3-deoxy-D-manno-octulosonate (KDO) and inorganic phosphate. The sequence is that of 3-deoxy-D-manno-octulosonate 8-phosphate phosphatase KdsC from Escherichia coli (strain B / BL21-DE3).